We begin with the raw amino-acid sequence, 421 residues long: F-box/kelch-repeat protein At1g26930 (421 aa).

The tract at residues 54–73 (TDSSEGEDNGSSSDSGTLIP) is disordered. Residues 70–117 (TLIPGMNRDDSLSCLIRCSRADYCSIASVNRSLRSLIRSGEIYRLRRL) form the F-box domain. 5 Kelch repeats span residues 114-167 (LRRL…LAVG), 169-212 (DLLV…SYGE), 213-260 (IAVL…FMDG), 261-312 (KFYV…MSAA), and 320-366 (AVVN…GLAF).

In Arabidopsis thaliana (Mouse-ear cress), this protein is F-box/kelch-repeat protein At1g26930.